The primary structure comprises 294 residues: Ribosomal protein L11 methyltransferase (294 aa).

S-adenosyl-L-methionine contacts are provided by T145, G166, D188, and N230.

The protein belongs to the methyltransferase superfamily. PrmA family.

The protein localises to the cytoplasm. It catalyses the reaction L-lysyl-[protein] + 3 S-adenosyl-L-methionine = N(6),N(6),N(6)-trimethyl-L-lysyl-[protein] + 3 S-adenosyl-L-homocysteine + 3 H(+). In terms of biological role, methylates ribosomal protein L11. This Glaesserella parasuis serovar 5 (strain SH0165) (Haemophilus parasuis) protein is Ribosomal protein L11 methyltransferase.